Reading from the N-terminus, the 264-residue chain is Small ribosomal subunit protein uS2 (264 aa).

The protein belongs to the universal ribosomal protein uS2 family.

This chain is Small ribosomal subunit protein uS2, found in Latilactobacillus sakei subsp. sakei (strain 23K) (Lactobacillus sakei subsp. sakei).